A 92-amino-acid polypeptide reads, in one-letter code: Small ribosomal subunit protein uS19 (92 aa).

The protein belongs to the universal ribosomal protein uS19 family.

In terms of biological role, protein S19 forms a complex with S13 that binds strongly to the 16S ribosomal RNA. In Rhodopseudomonas palustris (strain BisA53), this protein is Small ribosomal subunit protein uS19.